The primary structure comprises 718 residues: Origin of replication complex subunit 3 (718 aa).

Residues glycine 26–glycine 43 are compositionally biased toward low complexity. A disordered region spans residues glycine 26–aspartate 75. Residues isoleucine 659–serine 666 carry the Nuclear localization signal motif.

The protein belongs to the ORC3 family. Component of the origin recognition complex (ORC) composed of at least ORC1, ORC2, ORC3, ORC4, ORC5 and ORC6. ORC is regulated in a cell-cycle and development dependent manner. It is sequentially assembled at the exit from anaphase of mitosis and disassembled as cells enter S phase. As to expression, expressed at low levels in the shoot apical meristem (SAM), leaves, ears and roots (including root tips).

It localises to the nucleus. Functionally, component of the origin recognition complex (ORC) that binds origins of replication. DNA-binding is ATP-dependent. The specific DNA sequences that define origins of replication have not been identified yet. This Oryza sativa subsp. japonica (Rice) protein is Origin of replication complex subunit 3.